The chain runs to 297 residues: uncharacterized protein (297 aa).

Transmembrane regions (helical) follow at residues 3-23, 38-58, 103-123, and 128-148; these read DYIY…LYML, VIHI…MPAL, IEGI…TALL, and YVFL…LLAM.

It localises to the cell membrane. This is an uncharacterized protein from Bacillus subtilis (strain 168).